Reading from the N-terminus, the 549-residue chain is Cilia- and flagella-associated protein 45 (549 aa).

The tract at residues 1 to 27 (MPLSTAGVLSSASTASNRSRNRPRYRT) is disordered. Coiled coils occupy residues 119–232 (KEEL…MMEV) and 259–393 (IVEQ…KRNQ). Residues 391–416 (RNQEVADREWRRKEKENAQKKMETEA) form a disordered region.

This sequence belongs to the CFAP45 family. As to quaternary structure, microtubule inner protein component of sperm flagellar doublet microtubules. Interacts with AK8; dimerization with AK8 may create a cavity at the interface of the dimer that can accommodate AMP. Interacts with CFAP52. Interacts with ENKUR. Directly interacts with DNALI1. Interacts with DNAH11. Interacts with DNAI1. Expressed in trachea multiciliated cells.

The protein localises to the cytoplasm. The protein resides in the cytoskeleton. Its subcellular location is the cilium axoneme. It localises to the flagellum axoneme. It is found in the cell projection. The protein localises to the cilium. The protein resides in the flagellum. Its function is as follows. Microtubule inner protein (MIP) part of the dynein-decorated doublet microtubules (DMTs) in cilia axoneme, which is required for motile cilia beating. It is an AMP-binding protein that may facilitate dynein ATPase-dependent ciliary and flagellar beating via adenine nucleotide homeostasis. May function as a donor of AMP to AK8 and hence promote ADP production. The protein is Cilia- and flagella-associated protein 45 of Bos taurus (Bovine).